A 257-amino-acid chain; its full sequence is Imidazole glycerol phosphate synthase subunit HisF (257 aa).

Active-site residues include aspartate 11 and aspartate 130.

Belongs to the HisA/HisF family. Heterodimer of HisH and HisF.

The protein resides in the cytoplasm. It carries out the reaction 5-[(5-phospho-1-deoxy-D-ribulos-1-ylimino)methylamino]-1-(5-phospho-beta-D-ribosyl)imidazole-4-carboxamide + L-glutamine = D-erythro-1-(imidazol-4-yl)glycerol 3-phosphate + 5-amino-1-(5-phospho-beta-D-ribosyl)imidazole-4-carboxamide + L-glutamate + H(+). The protein operates within amino-acid biosynthesis; L-histidine biosynthesis; L-histidine from 5-phospho-alpha-D-ribose 1-diphosphate: step 5/9. In terms of biological role, IGPS catalyzes the conversion of PRFAR and glutamine to IGP, AICAR and glutamate. The HisF subunit catalyzes the cyclization activity that produces IGP and AICAR from PRFAR using the ammonia provided by the HisH subunit. This is Imidazole glycerol phosphate synthase subunit HisF from Francisella philomiragia subsp. philomiragia (strain ATCC 25017 / CCUG 19701 / FSC 153 / O#319-036).